We begin with the raw amino-acid sequence, 350 residues long: tRNA uridine(34) hydroxylase (350 aa).

A Rhodanese domain is found at 146-240 (DDPDAVFIDM…YARRAREQGL (95 aa)). Cysteine 200 acts as the Cysteine persulfide intermediate in catalysis. Basic and acidic residues predominate over residues 319-328 (RRRRAGRENG). The tract at residues 319–350 (RRRRAGRENGNKIFNKSRGRLNSKLSIPDPAE) is disordered.

It belongs to the TrhO family.

The enzyme catalyses uridine(34) in tRNA + AH2 + O2 = 5-hydroxyuridine(34) in tRNA + A + H2O. Catalyzes oxygen-dependent 5-hydroxyuridine (ho5U) modification at position 34 in tRNAs. This is tRNA uridine(34) hydroxylase from Salmonella choleraesuis (strain SC-B67).